Consider the following 524-residue polypeptide: Cytokinin dehydrogenase 7 (524 aa).

An FAD-binding PCMH-type domain is found at 58–238 (NCVKPLAVVR…TRARVLLQPA (181 aa)). The FAD site is built by alanine 91, glycine 93, asparagine 94, and glycine 95. Position 96 is a pros-8alpha-FAD histidine (histidine 96). FAD-binding residues include serine 97, glutamine 101, aspartate 162, threonine 167, serine 173, valine 177, isoleucine 228, tyrosine 479, serine 514, and glutamine 517.

The protein belongs to the oxygen-dependent FAD-linked oxidoreductase family. FAD serves as cofactor. Expressed in the vasculature of roots, hypocotyls, cotyledons and leaves of young seedlings. In flowers, expressed in the transmitting tissue of the gynoecium prior to pollination. Expressed in the mature embryo sac with maximum activity in the egg cell and the synergids.

The protein localises to the cytoplasm. Its subcellular location is the cytosol. The enzyme catalyses N(6)-dimethylallyladenine + A + H2O = 3-methyl-2-butenal + adenine + AH2. Functionally, catalyzes the oxidation of cytokinins, a family of N(6)-substituted adenine derivatives that are plant hormones, where the substituent is an isopentenyl group. Catalyzes in vitro the oxidation of various types of cytokinin nucleotides that are known as direct products of cytokinin biosynthesis. The sequence is that of Cytokinin dehydrogenase 7 (CKX7) from Arabidopsis thaliana (Mouse-ear cress).